A 483-amino-acid polypeptide reads, in one-letter code: Cobyric acid synthase (483 aa).

A GATase cobBQ-type domain is found at 251-438 (ALIVAVPMLP…LHGVFSADRF (188 aa)). Residue cysteine 333 is the Nucleophile of the active site. Histidine 430 is a catalytic residue.

Belongs to the CobB/CobQ family. CobQ subfamily.

It participates in cofactor biosynthesis; adenosylcobalamin biosynthesis. In terms of biological role, catalyzes amidations at positions B, D, E, and G on adenosylcobyrinic A,C-diamide. NH(2) groups are provided by glutamine, and one molecule of ATP is hydrogenolyzed for each amidation. In Brucella melitensis biotype 2 (strain ATCC 23457), this protein is Cobyric acid synthase.